A 442-amino-acid chain; its full sequence is 5-methylthioadenosine/S-adenosylhomocysteine deaminase (442 aa).

Zn(2+) is bound by residues His-70 and His-72. Substrate contacts are provided by Glu-99 and His-191. Zn(2+) is bound at residue His-218. Glu-221 and Asp-306 together coordinate substrate. Asp-306 lines the Zn(2+) pocket.

Belongs to the metallo-dependent hydrolases superfamily. MTA/SAH deaminase family. Requires Zn(2+) as cofactor.

It carries out the reaction S-adenosyl-L-homocysteine + H2O + H(+) = S-inosyl-L-homocysteine + NH4(+). The enzyme catalyses S-methyl-5'-thioadenosine + H2O + H(+) = S-methyl-5'-thioinosine + NH4(+). Catalyzes the deamination of 5-methylthioadenosine and S-adenosyl-L-homocysteine into 5-methylthioinosine and S-inosyl-L-homocysteine, respectively. Is also able to deaminate adenosine. This is 5-methylthioadenosine/S-adenosylhomocysteine deaminase from Nitratidesulfovibrio vulgaris (strain DP4) (Desulfovibrio vulgaris).